The sequence spans 441 residues: Proline--tRNA ligase (441 aa).

It belongs to the class-II aminoacyl-tRNA synthetase family. ProS type 2 subfamily. In terms of assembly, homodimer.

It is found in the cytoplasm. The enzyme catalyses tRNA(Pro) + L-proline + ATP = L-prolyl-tRNA(Pro) + AMP + diphosphate. Its function is as follows. Catalyzes the attachment of proline to tRNA(Pro) in a two-step reaction: proline is first activated by ATP to form Pro-AMP and then transferred to the acceptor end of tRNA(Pro). The polypeptide is Proline--tRNA ligase (Methylorubrum extorquens (strain PA1) (Methylobacterium extorquens)).